The chain runs to 105 residues: Ketoisovalerate oxidoreductase subunit VorD (105 aa).

4Fe-4S ferredoxin-type domains lie at 44–73 (FMPV…IKED) and 74–103 (GFVA…MVRE). Residues Cys53, Cys56, Cys59, Cys63, Cys83, Cys86, Cys89, and Cys93 each contribute to the [4Fe-4S] cluster site.

In terms of assembly, heterotetramer of one alpha, one beta, one delta and one gamma chain. It depends on [4Fe-4S] cluster as a cofactor.

It carries out the reaction 3-methyl-2-oxobutanoate + 2 oxidized [2Fe-2S]-[ferredoxin] + CoA = 2-methylpropanoyl-CoA + 2 reduced [2Fe-2S]-[ferredoxin] + CO2 + H(+). This Pyrococcus abyssi (strain GE5 / Orsay) protein is Ketoisovalerate oxidoreductase subunit VorD (vorD).